Consider the following 141-residue polypeptide: Large ribosomal subunit protein uL11 (141 aa).

Belongs to the universal ribosomal protein uL11 family. Part of the ribosomal stalk of the 50S ribosomal subunit. Interacts with L10 and the large rRNA to form the base of the stalk. L10 forms an elongated spine to which L12 dimers bind in a sequential fashion forming a multimeric L10(L12)X complex. One or more lysine residues are methylated.

Forms part of the ribosomal stalk which helps the ribosome interact with GTP-bound translation factors. The polypeptide is Large ribosomal subunit protein uL11 (Prochlorococcus marinus (strain NATL1A)).